The primary structure comprises 1499 residues: Phospholipid-transporting ATPase VA (1499 aa).

A disordered region spans residues M1–R53. The Cytoplasmic portion of the chain corresponds to M1–P86. Basic residues predominate over residues G15–T26. Residues A87–F106 traverse the membrane as a helical segment. Over Q107 to L110 the chain is Exoplasmic loop. Residues A111–W128 traverse the membrane as a helical segment. The Cytoplasmic portion of the chain corresponds to E129–D309. The helical transmembrane segment at V310–I332 threads the bilayer. The Exoplasmic loop segment spans residues W333–F362. The helical transmembrane segment at L363–V384 threads the bilayer. Over K385–N1087 the chain is Cytoplasmic. D427 functions as the 4-aspartylphosphate intermediate in the catalytic mechanism. Residues D427, K428, and T429 each coordinate ATP. D427 serves as a coordination point for Mg(2+). Position 429 (T429) interacts with Mg(2+). A disordered region spans residues A464–I531. S466 is subject to Phosphoserine. Residues S477–T499 show a composition bias toward polar residues. Residues E700, F742, K766, R809, T889, G890, D891, R1005, and K1011 each contribute to the ATP site. D1031 lines the Mg(2+) pocket. ATP-binding residues include N1034 and D1035. Residue D1035 coordinates Mg(2+). Residues M1088 to F1108 traverse the membrane as a helical segment. Residues F1109–D1119 lie on the Exoplasmic loop side of the membrane. The helical transmembrane segment at Q1120–V1140 threads the bilayer. Topologically, residues L1141–T1170 are cytoplasmic. Residues F1171–A1192 traverse the membrane as a helical segment. The Exoplasmic loop portion of the chain corresponds to Y1193–D1199. A helical transmembrane segment spans residues L1200–E1222. The Cytoplasmic portion of the chain corresponds to T1223–W1228. Residues L1229–N1249 form a helical membrane-spanning segment. Topologically, residues A1250 to A1267 are exoplasmic loop. The chain crosses the membrane as a helical span at residues L1268–F1292. Residues R1293–Q1499 lie on the Cytoplasmic side of the membrane. Disordered regions lie at residues T1311 to H1356 and D1464 to Q1499. Residues L1330–S1340 show a composition bias toward basic and acidic residues. The span at G1341 to H1356 shows a compositional bias: polar residues.

This sequence belongs to the cation transport ATPase (P-type) (TC 3.A.3) family. Type IV subfamily. As to quaternary structure, component of a P4-ATPase flippase complex which consists of a catalytic alpha subunit ATP10A and an accessory beta subunit TMEM30A. It depends on Mg(2+) as a cofactor. In terms of processing, autophosphorylated at the conserved aspartate of the P-type ATPase signature sequence. Widely expressed, with highest levels in kidney, followed by lung, brain, prostate, testis, ovary and small intestine.

The protein localises to the cell membrane. The protein resides in the endoplasmic reticulum membrane. It catalyses the reaction ATP + H2O + phospholipidSide 1 = ADP + phosphate + phospholipidSide 2.. It carries out the reaction a 1,2-diacyl-sn-glycero-3-phosphocholine(out) + ATP + H2O = a 1,2-diacyl-sn-glycero-3-phosphocholine(in) + ADP + phosphate + H(+). The catalysed reaction is a beta-D-glucosyl-(1&lt;-&gt;1')-N-acylsphing-4-enine(out) + ATP + H2O = a beta-D-glucosyl-(1&lt;-&gt;1')-N-acylsphing-4-enine(in) + ADP + phosphate + H(+). With respect to regulation, inhibited under hypotonic conditions. Functionally, catalytic component of P4-ATPase flippase complex, which catalyzes the hydrolysis of ATP coupled to the transport of phosphatidylcholine (PC) from the outer to the inner leaflet of the plasma membrane. Initiates inward plasma membrane bending and recruitment of Bin/amphiphysin/Rvs (BAR) domain-containing proteins involved in membrane tubulation and cell trafficking. Facilitates ITGB1/beta1 integrin endocytosis, delaying cell adhesion and cell spreading on extracellular matrix. Has low flippase activity toward glucosylceramide (GlcCer). This Homo sapiens (Human) protein is Phospholipid-transporting ATPase VA.